Reading from the N-terminus, the 111-residue chain is V-type proton ATPase subunit G 2 (111 aa).

Belongs to the V-ATPase G subunit family. As to quaternary structure, V-ATPase is a heteromultimeric enzyme composed of a peripheral catalytic V1 complex (components A to H) attached to an integral membrane V0 proton pore complex (components: a, c, c', c'' and d).

Functionally, catalytic subunit of the peripheral V1 complex of vacuolar ATPase (V-ATPase). V-ATPase is responsible for acidifying a variety of intracellular compartments in eukaryotic cells. The sequence is that of V-type proton ATPase subunit G 2 (VATG2) from Nicotiana tabacum (Common tobacco).